A 121-amino-acid chain; its full sequence is Large ribosomal subunit protein uL24 (121 aa).

The segment at 1–30 (MVRIVSKQPRKQRKARYNAPNHTRGRFLSA) is disordered.

Belongs to the universal ribosomal protein uL24 family. In terms of assembly, part of the 50S ribosomal subunit.

Its function is as follows. One of two assembly initiator proteins, it binds directly to the 5'-end of the 23S rRNA, where it nucleates assembly of the 50S subunit. In terms of biological role, located at the polypeptide exit tunnel on the outside of the subunit. This Methanoculleus marisnigri (strain ATCC 35101 / DSM 1498 / JR1) protein is Large ribosomal subunit protein uL24.